Here is a 152-residue protein sequence, read N- to C-terminus: Protein Smg homolog (152 aa).

Belongs to the Smg family.

The polypeptide is Protein Smg homolog (Chromobacterium violaceum (strain ATCC 12472 / DSM 30191 / JCM 1249 / CCUG 213 / NBRC 12614 / NCIMB 9131 / NCTC 9757 / MK)).